We begin with the raw amino-acid sequence, 170 residues long: 4-hydroxyphenylacetate 3-monooxygenase reductase component (170 aa).

Belongs to the non-flavoprotein flavin reductase family. HpaC subfamily. As to quaternary structure, homodimer. 4-HPA 3-monooxygenase consists of a reductase component HpaC and an oxygenase component HpaB.

The enzyme catalyses a reduced flavin + NAD(+) = an oxidized flavin + NADH + 2 H(+). It participates in aromatic compound metabolism; 4-hydroxyphenylacetate degradation; pyruvate and succinate semialdehyde from 4-hydroxyphenylacetate: step 1/7. Catalyzes the reduction of free flavins (FMN, FAD and riboflavin) by NADH. Subsequently, the reduced flavins diffuse to the large HpaB component or to other electron acceptors such as cytochrome c and Fe(3+) ion. In Escherichia coli, this protein is 4-hydroxyphenylacetate 3-monooxygenase reductase component (hpaC).